The primary structure comprises 544 residues: CTP synthase (544 aa).

Residues 1-267 (MSKFVFVTGG…GDLLVSRLHL (267 aa)) form an amidoligase domain region. Serine 13 contacts CTP. Residue serine 13 coordinates UTP. An ATP-binding site is contributed by 14–19 (SVGKGI). An L-glutamine-binding site is contributed by tyrosine 54. Residue aspartate 71 coordinates ATP. Residues aspartate 71 and glutamate 141 each contribute to the Mg(2+) site. CTP-binding positions include 148 to 150 (DIE), 188 to 193 (KTKPTQ), and lysine 224. Residues 188–193 (KTKPTQ) and lysine 224 contribute to the UTP site. A Glutamine amidotransferase type-1 domain is found at 299–534 (YVELKDAYYS…INAAKKVIRD (236 aa)). Glycine 354 is an L-glutamine binding site. The Nucleophile; for glutamine hydrolysis role is filled by cysteine 381. Residues 382-385 (LGMQ), glutamate 405, and arginine 462 each bind L-glutamine. Active-site residues include histidine 507 and glutamate 509.

This sequence belongs to the CTP synthase family. In terms of assembly, homotetramer.

It catalyses the reaction UTP + L-glutamine + ATP + H2O = CTP + L-glutamate + ADP + phosphate + 2 H(+). The enzyme catalyses L-glutamine + H2O = L-glutamate + NH4(+). The catalysed reaction is UTP + NH4(+) + ATP = CTP + ADP + phosphate + 2 H(+). Its pathway is pyrimidine metabolism; CTP biosynthesis via de novo pathway; CTP from UDP: step 2/2. Allosterically activated by GTP, when glutamine is the substrate; GTP has no effect on the reaction when ammonia is the substrate. The allosteric effector GTP functions by stabilizing the protein conformation that binds the tetrahedral intermediate(s) formed during glutamine hydrolysis. Inhibited by the product CTP, via allosteric rather than competitive inhibition. Its function is as follows. Catalyzes the ATP-dependent amination of UTP to CTP with either L-glutamine or ammonia as the source of nitrogen. Regulates intracellular CTP levels through interactions with the four ribonucleotide triphosphates. This Dehalococcoides mccartyi (strain ATCC BAA-2266 / KCTC 15142 / 195) (Dehalococcoides ethenogenes (strain 195)) protein is CTP synthase.